A 220-amino-acid chain; its full sequence is Ribose-5-phosphate isomerase A (220 aa).

Substrate is bound by residues 25–28 (TGST), 80–83 (DGAD), and 93–96 (KGGG). Catalysis depends on E102, which acts as the Proton acceptor. K120 contributes to the substrate binding site.

This sequence belongs to the ribose 5-phosphate isomerase family. As to quaternary structure, homodimer.

It carries out the reaction aldehydo-D-ribose 5-phosphate = D-ribulose 5-phosphate. It functions in the pathway carbohydrate degradation; pentose phosphate pathway; D-ribose 5-phosphate from D-ribulose 5-phosphate (non-oxidative stage): step 1/1. Functionally, catalyzes the reversible conversion of ribose-5-phosphate to ribulose 5-phosphate. The sequence is that of Ribose-5-phosphate isomerase A from Bacillus thuringiensis subsp. konkukian (strain 97-27).